Reading from the N-terminus, the 631-residue chain is PTS system glucosamine-specific EIICBA component (631 aa).

The region spanning 3–382 is the PTS EIIC type-1 domain; it reads KKAFQILQQL…WNLKTPGRET (380 aa). A run of 8 helical transmembrane segments spans residues 12–32, 56–76, 106–126, 149–169, 196–216, 243–263, 298–318, and 350–370; these read LGRA…LLRF, LIFA…AGLA, HLID…AYLY, IITS…WPLI, LLIP…MMGE, FMMG…LAII, FLFV…VIFV, and VVIP…RFAI. Positions 397-478 constitute a PTS EIIB type-1 domain; it reads DQLAFHVLQA…KTIMAGGVPA (82 aa). The active-site Phosphocysteine intermediate; for EIIB activity is the Cys-419. Cys-419 is modified (phosphocysteine). Residues 515 to 619 form the PTS EIIA type-1 domain; sequence DQVFSEKMMG…SAITPVIFTN (105 aa). His-567 (tele-phosphohistidine intermediate; for EIIA activity) is an active-site residue. His-567 is subject to Phosphohistidine.

The protein localises to the cell membrane. The enzyme catalyses D-glucosamine(out) + N(pros)-phospho-L-histidyl-[protein] = D-glucosamine 6-phosphate(in) + L-histidyl-[protein]. The phosphoenolpyruvate-dependent sugar phosphotransferase system (sugar PTS), a major carbohydrate active transport system, catalyzes the phosphorylation of incoming sugar substrates concomitantly with their translocation across the cell membrane. This system is involved in glucosamine transport. In vitro, when expressed in the absence of GamR and NagP, can transport N-acetylglucosamine. Its function is as follows. In addition, plays an important role in the phosphorylation of EIIA-deficient PTS transporters. The EIIA domain can transfer a phosphoryl group to EIIA-deficient PTS transporters, enabling growth with maltose, N-acetylglucosamine, sucrose or trehalose as the sole carbon source. This chain is PTS system glucosamine-specific EIICBA component, found in Bacillus subtilis (strain 168).